The primary structure comprises 267 residues: Small ribosomal subunit protein uS2c (267 aa).

The tract at residues 237–267 is disordered; it reads KQKIKKTGVKISGNRRTSSITKKRNPASSKI. Positions 250 to 267 are enriched in polar residues; that stretch reads NRRTSSITKKRNPASSKI.

This sequence belongs to the universal ribosomal protein uS2 family.

It localises to the plastid. The protein resides in the chloroplast. This is Small ribosomal subunit protein uS2c (rps2) from Chlorella vulgaris (Green alga).